We begin with the raw amino-acid sequence, 309 residues long: Dicarboxylate carrier UCP2 (309 aa).

Topologically, residues 1 to 16 (MVGFKATDVPPTATVK) are mitochondrial intermembrane. Solcar repeat units follow at residues 11–106 (PTAT…VKQF), 114–203 (ASIG…IKDA), and 212–297 (DDLP…LKRA). Positions 16–63 (KFLGAGTAACIADLITFPLDTAKVRLQIQGESQGPVHATASAQYRGVM) are important for interaction with long-chain fatty acids. The helical transmembrane segment at 17-40 (FLGAGTAACIADLITFPLDTAKVR) threads the bilayer. The Mitochondrial matrix portion of the chain corresponds to 41–77 (LQIQGESQGPVHATASAQYRGVMGTILTMVRTEGPRS). Residues 78–103 (LYNGLVAGLQRQMSFASVRIGLYDSV) traverse the membrane as a helical segment. Topologically, residues 104 to 119 (KQFYTKGSEHASIGSR) are mitochondrial intermembrane. A helical membrane pass occupies residues 120-145 (LLAGSTTGALAVAVAQPTDVVKVRFQ). The Mitochondrial matrix portion of the chain corresponds to 146-173 (AQARAGGGRRYQSTVNAYKTIAREEGFR). A helical transmembrane segment spans residues 174–199 (GLWKGTSPNVARNAIVNCAELVTYDL). Over 200–217 (IKDALLKANLMTDDLPCH) the chain is Mitochondrial intermembrane. The chain crosses the membrane as a helical span at residues 218–242 (FTSAFGAGFCTTVIASPVDVVKTRY). Residues 243–268 (MNSALGQYSSAGHCALTMLQKEGPRA) are Mitochondrial matrix-facing. The chain crosses the membrane as a helical span at residues 269-294 (FYKGFMPSFLRLGSWNVVMFVTYEQL). Positions 278 to 285 (LRLGSWNV) are important for interaction with long-chain fatty acids. The Mitochondrial intermembrane portion of the chain corresponds to 295–309 (KRALMAACTSREAPF).

Belongs to the mitochondrial carrier (TC 2.A.29) family. Homotetramer. Adopts an asymmetrical dimer of dimers functional form. Interacts with MICU1 (when methylated); leading to decrease the calcium sensitivity of MICU1.

It localises to the mitochondrion inner membrane. It catalyses the reaction L-aspartate(out) + phosphate(in) + H(+)(in) = L-aspartate(in) + phosphate(out) + H(+)(out). It carries out the reaction oxaloacetate(out) + phosphate(in) + H(+)(in) = oxaloacetate(in) + phosphate(out) + H(+)(out). The catalysed reaction is (S)-malate(out) + phosphate(in) + H(+)(in) = (S)-malate(in) + phosphate(out) + H(+)(out). The enzyme catalyses malonate(out) + phosphate(in) + H(+)(in) = malonate(in) + phosphate(out) + H(+)(out). It catalyses the reaction sulfate(out) + phosphate(in) + H(+)(in) = sulfate(in) + phosphate(out) + H(+)(out). It carries out the reaction (S)-malate(out) = (S)-malate(in). The catalysed reaction is L-aspartate(out) = L-aspartate(in). The enzyme catalyses phosphate(in) = phosphate(out). It catalyses the reaction chloride(in) = chloride(out). It carries out the reaction H(+)(in) = H(+)(out). The catalysed reaction is a long-chain fatty acid(out) = a long-chain fatty acid(in). Antiporter that exports dicarboxylate intermediates of the Krebs cycle in exchange for phosphate plus a proton across the inner membrane of mitochondria, a process driven by mitochondrial motive force with an overall impact on glycolysis, glutaminolysis and glutathione-dependent redox balance. Continuous export of oxaloacetate and related four-carbon dicarboxylates from mitochondrial matrix into the cytosol negatively regulates the oxidation of acetyl-CoA substrates via the Krebs cycle lowering the ATP/ADP ratio and reactive oxygen species (ROS) production. May mediate inducible proton entry into the mitochondrial matrix affecting ATP turnover as a protection mechanism against oxidative stress. The proton currents are most likely associated with fatty acid flipping across the inner membrane of mitochondria in a metabolic process regulated by free fatty acids and purine nucleotides. Regulates the use of glucose as a source of energy. Required for glucose-induced DRP1-dependent mitochondrial fission and neuron activation in the ventromedial nucleus of the hypothalamus (VMH). This mitochondrial adaptation mechanism modulates the VMH pool of glucose-excited neurons with an impact on systemic glucose homeostasis. Regulates ROS levels and metabolic reprogramming of macrophages during the resolution phase of inflammation. Attenuates ROS production in response to IL33 to preserve the integrity of the Krebs cycle required for persistent production of itaconate and subsequent GATA3-dependent differentiation of inflammation-resolving alternatively activated macrophages. Can unidirectionally transport anions including L-malate, L-aspartate, phosphate and chloride ions. Does not mediate adaptive thermogenesis. The protein is Dicarboxylate carrier UCP2 (UCP2) of Pongo abelii (Sumatran orangutan).